Consider the following 258-residue polypeptide: Microtubule-associated protein RP/EB family member 1 (258 aa).

Residues 14–116 (NLSRHDMLAW…FVQWFKKFFD (103 aa)) enclose the Calponin-homology (CH) domain. An EB1 C-terminal domain is found at 175-245 (KKAAGDDESA…LYATDEGFVI (71 aa)).

The protein belongs to the MAPRE family.

It is found in the cytoplasm. The protein localises to the cytoskeleton. It localises to the microtubule organizing center. The protein resides in the centrosome. Its subcellular location is the golgi apparatus. It is found in the spindle. The protein localises to the spindle pole. In terms of biological role, plus-end tracking protein (+TIP) that binds to the plus-end of microtubules and regulates the dynamics of the microtubule cytoskeleton. Promotes cytoplasmic microtubule nucleation and elongation. Involved in mitotic spindle positioning by stabilizing microtubules and promoting dynamic connection between astral microtubules and the cortex during mitotic chromosome segregation. This Gallus gallus (Chicken) protein is Microtubule-associated protein RP/EB family member 1 (MAPRE1).